The following is a 232-amino-acid chain: Sugar fermentation stimulation protein homolog (232 aa).

Belongs to the SfsA family.

The chain is Sugar fermentation stimulation protein homolog from Shouchella clausii (strain KSM-K16) (Alkalihalobacillus clausii).